The following is a 488-amino-acid chain: 3-octaprenyl-4-hydroxybenzoate carboxy-lyase (488 aa).

N172 contributes to the Mn(2+) binding site. Residues 175-177 (IYR), 189-191 (RWL), and 194-195 (RG) each bind prenylated FMN. E238 contributes to the Mn(2+) binding site. Residue D287 is the Proton donor of the active site.

Belongs to the UbiD family. In terms of assembly, homohexamer. The cofactor is prenylated FMN. Mn(2+) serves as cofactor.

Its subcellular location is the cell membrane. The enzyme catalyses a 4-hydroxy-3-(all-trans-polyprenyl)benzoate + H(+) = a 2-(all-trans-polyprenyl)phenol + CO2. The protein operates within cofactor biosynthesis; ubiquinone biosynthesis. Catalyzes the decarboxylation of 3-octaprenyl-4-hydroxy benzoate to 2-octaprenylphenol, an intermediate step in ubiquinone biosynthesis. The sequence is that of 3-octaprenyl-4-hydroxybenzoate carboxy-lyase from Hahella chejuensis (strain KCTC 2396).